The sequence spans 411 residues: Peptidyl-prolyl cis-trans isomerase (411 aa).

N-acetylserine is present on Ser-2. Disordered stretches follow at residues 54–127 (IIKR…TLSP) and 160–302 (NYVK…PKSK). Residues 61–87 (FEDDDFLGGDFDEDEIDEESSEEEEEE) are compositionally biased toward acidic residues. Residues Ser-80 and Ser-81 each carry the phosphoserine modification. At Thr-89 the chain carries Phosphothreonine. Composition is skewed to acidic residues over residues 103 to 118 (ESED…DEFQ) and 173 to 242 (EGED…EEQK). A Phosphotyrosine; by CK2 modification is found at Tyr-184. Position 186 is a phosphoserine; by CK2 (Ser-186). Basic residues predominate over residues 251-260 (KSKKEKKRKH). Positions 256 to 271 (KKRKHEEKEEEKKAKK) match the Nuclear localization signal motif. Over residues 261 to 296 (EEKEEEKKAKKVKKVEFKKDLEEGPTKPKSKKEQDK) the composition is skewed to basic and acidic residues. Residues 324-411 (GARVGMRYIG…FDVKLVSMKN (88 aa)) enclose the PPIase FKBP-type domain.

The protein belongs to the FKBP-type PPIase family. FKBP3/4 subfamily. In terms of assembly, interacts with NOP53. Post-translationally, phosphorylated at tyrosine and dephosphorylated by the phosphotyrosine-specific phosphoprotein phosphatase PTP1.

It is found in the nucleus. The protein localises to the nucleolus. It carries out the reaction [protein]-peptidylproline (omega=180) = [protein]-peptidylproline (omega=0). Inhibited by both FK506 and rapamycin. Its function is as follows. Proline isomerase that belongs to an abundant class of enzymes that catalyze the cis-trans isomerization of X-Pro peptide bonds and can accelerate the refolding of proline-containing polypeptides. Specifically binds nuclear localization sequences. May be involved in the assembly or folding of ribosomal proteins. The sequence is that of Peptidyl-prolyl cis-trans isomerase from Saccharomyces cerevisiae (strain ATCC 204508 / S288c) (Baker's yeast).